A 1224-amino-acid polypeptide reads, in one-letter code: Cytosolic carboxypeptidase 1 (1224 aa).

Residues 361 to 398 are disordered; the sequence is PPDVDDVVDESDDNDDAETESEIETEDDKDQNFKNDDI. Residues 363–389 are compositionally biased toward acidic residues; it reads DVDDVVDESDDNDDAETESEIETEDDK. The 291-residue stretch at 846–1136 folds into the Peptidase M14 domain; that stretch reads YPYTYSTLKM…KFCVGLLRLK (291 aa). H918, E921, and H1015 together coordinate Zn(2+). E1100 functions as the Proton donor/acceptor in the catalytic mechanism. Acidic residues predominate over residues 1186–1197; the sequence is SAESNDDQDAEL. Residues 1186 to 1224 are disordered; that stretch reads SAESNDDQDAELADNVGDYEANNQEDGLSDSDSTRILLS. Polar residues predominate over residues 1206–1224; sequence ANNQEDGLSDSDSTRILLS.

This sequence belongs to the peptidase M14 family. Zn(2+) serves as cofactor.

It is found in the cytoplasm. The protein resides in the cytosol. The protein localises to the nucleus. It localises to the mitochondrion. The catalysed reaction is (L-glutamyl)(n+1)-gamma-L-glutamyl-L-glutamyl-[protein] + H2O = (L-glutamyl)(n)-gamma-L-glutamyl-L-glutamyl-[protein] + L-glutamate. The enzyme catalyses C-terminal L-alpha-aminoacyl-L-glutamyl-L-glutamyl-[tubulin] + H2O = C-terminal L-alpha-aminoacyl-L-glutamyl-[tubulin] + L-glutamate. Its function is as follows. Metallocarboxypeptidase that mediates protein deglutamylation of tubulin and non-tubulin target proteins. Catalyzes the removal of polyglutamate side chains present on the gamma-carboxyl group of glutamate residues within the C-terminal tail of alpha- and beta-tubulin. Specifically cleaves tubulin long-side-chains, while it is not able to remove the branching point glutamate. Also catalyzes the removal of polyglutamate residues from the carboxy-terminus of alpha-tubulin as well as non-tubulin proteins. The polypeptide is Cytosolic carboxypeptidase 1 (AGTPBP1) (Gallus gallus (Chicken)).